A 284-amino-acid chain; its full sequence is uncharacterized protein (284 aa).

Residues 9-28 (IILRWVVTLYIYGFILYQIT) traverse the membrane as a helical segment.

The protein localises to the membrane. This is an uncharacterized protein from Aquifex aeolicus (strain VF5).